The following is a 107-amino-acid chain: Prokineticin-2 (107 aa).

A signal peptide spans 1–26 (MEDPRCAPLLLLLLLPLLLTPPAGDA). 5 disulfide bridges follow: Cys33/Cys45, Cys39/Cys57, Cys44/Cys85, Cys67/Cys93, and Cys87/Cys103.

Belongs to the AVIT (prokineticin) family. In terms of tissue distribution, expressed at high levels in testis and at lower levels in brain, lung, ovary, spleen, thymus and uterus.

It localises to the secreted. Functionally, may function as an output molecule from the suprachiasmatic nucleus (SCN) that transmits behavioral circadian rhythm. May also function locally within the SCN to synchronize output. Potently contracts gastrointestinal (GI) smooth muscle. This chain is Prokineticin-2 (Prok2), found in Rattus norvegicus (Rat).